Reading from the N-terminus, the 658-residue chain is MWRNGIVYRAVKNFVRHNSTNNAAKNLKSIKVEDIQNRIENIPIENYRNFSIVAHIDHGKSTLSDRLLEITGVISKTEGTSGQRVLDKLEVEKERGITIKAQTCSMIYNDKRNGQDFLLHLIDTPGHVDFRDEVSRSYKACNGAILLVDASKGVQSQTVANFYLAYSMGLKLIPVINKIDLNVAEVEKTAGQIESTFEMSQDEIIKVSSKSGINIQEKLLPAVIDRIPPPTGIKNKPFRALLVDSWYDSYLGVVLLVHVVDGSIKKGDKISSAITQMKYEIKEIGIMHPDRVNTGKLTTGQVGYIVPGMKNSQDAKIGDTFMKVGLESQTEILPGFEETKPMVFVGAFPADGVEFKALDDDINRLVLNDKSVTIEMENSNALGQGWRLGFLGSLHASVFKERLEKEYGSQLIITQPTVPYLIEYEDGTIKEVTNPNEFPTNRKAKGVKSIANVQEPYVEAIMTLPDEYLGNVITLCDNHRGKQVEIKYMDSGQSNAIKQVMLRYEIPLFELVDNFFGRLKSVSQGYATLDYEDIGFRPSDIVKLELLINGTTIDAITSILHRSKVNKVGTEWVKNFKKYVKSQQYEVVIQARINNSKIIARETIKARRKDVLAKLHASDITRRKKLLVKQKEGKKKLKMRSIGNIQINTDAYQEFLRR.

The tr-type G domain maps to 45–231 (ENYRNFSIVA…AVIDRIPPPT (187 aa)). Residues 54–61 (AHIDHGKS), 123–127 (DTPGH), and 177–180 (NKID) contribute to the GTP site.

Belongs to the TRAFAC class translation factor GTPase superfamily. Classic translation factor GTPase family. LepA subfamily.

The protein localises to the mitochondrion inner membrane. The catalysed reaction is GTP + H2O = GDP + phosphate + H(+). In terms of biological role, promotes mitochondrial protein synthesis. May act as a fidelity factor of the translation reaction, by catalyzing a one-codon backward translocation of tRNAs on improperly translocated ribosomes. Binds to mitochondrial ribosomes in a GTP-dependent manner. The protein is Translation factor GUF1, mitochondrial of Vanderwaltozyma polyspora (strain ATCC 22028 / DSM 70294 / BCRC 21397 / CBS 2163 / NBRC 10782 / NRRL Y-8283 / UCD 57-17) (Kluyveromyces polysporus).